Reading from the N-terminus, the 312-residue chain is Non-structural protein 12A (312 aa).

The span at 1–23 (MFKSGSGSLKRSGSISSVKSFSG) shows a compositional bias: low complexity. Disordered regions lie at residues 1–37 (MFKS…RGSV), 62–99 (FVPE…QNAD), and 111–161 (ESSK…GTGD). Basic and acidic residues predominate over residues 63-77 (VPEKTKSEGNLKDKS). The span at 78–98 (SVITGNFGSSGPINAHTNQNA) shows a compositional bias: polar residues. Over residues 122-134 (DARHTATDSRLSQ) the composition is skewed to basic and acidic residues.

It belongs to the phytoreovirus non-structural protein Pns12A family.

It is found in the host cytoplasm. Constituent of viral factories. Binds to ssRNA and dsRNA. This chain is Non-structural protein 12A, found in Alopecurus aequalis (Barnyard grass).